We begin with the raw amino-acid sequence, 271 residues long: Formamidopyrimidine-DNA glycosylase (271 aa).

Residue proline 2 is the Schiff-base intermediate with DNA of the active site. Glutamate 3 (proton donor) is an active-site residue. The active-site Proton donor; for beta-elimination activity is lysine 58. DNA-binding residues include arginine 110 and arginine 152. Residues 237–271 form an FPG-type zinc finger; that stretch reads AVYGQTGKPCTVCGTPIARIRLGNRSTWFCPVCQK. Arginine 261 serves as the catalytic Proton donor; for delta-elimination activity.

Belongs to the FPG family. Monomer. Zn(2+) serves as cofactor.

It carries out the reaction Hydrolysis of DNA containing ring-opened 7-methylguanine residues, releasing 2,6-diamino-4-hydroxy-5-(N-methyl)formamidopyrimidine.. The enzyme catalyses 2'-deoxyribonucleotide-(2'-deoxyribose 5'-phosphate)-2'-deoxyribonucleotide-DNA = a 3'-end 2'-deoxyribonucleotide-(2,3-dehydro-2,3-deoxyribose 5'-phosphate)-DNA + a 5'-end 5'-phospho-2'-deoxyribonucleoside-DNA + H(+). Involved in base excision repair of DNA damaged by oxidation or by mutagenic agents. Acts as a DNA glycosylase that recognizes and removes damaged bases. Has a preference for oxidized purines, such as 7,8-dihydro-8-oxoguanine (8-oxoG). Has AP (apurinic/apyrimidinic) lyase activity and introduces nicks in the DNA strand. Cleaves the DNA backbone by beta-delta elimination to generate a single-strand break at the site of the removed base with both 3'- and 5'-phosphates. In Geobacter sulfurreducens (strain ATCC 51573 / DSM 12127 / PCA), this protein is Formamidopyrimidine-DNA glycosylase.